The sequence spans 555 residues: mRNA cleavage and polyadenylation factor CLP1 (555 aa).

ATP contacts are provided by residues Glu-30, Lys-69, and Tyr-156 to Ser-161. The interval Asp-431–Gly-451 is disordered.

This sequence belongs to the Clp1 family. Clp1 subfamily. Component of a pre-mRNA cleavage factor complex. Interacts directly with PCF11.

The protein localises to the nucleus. In terms of biological role, required for endonucleolytic cleavage during polyadenylation-dependent pre-mRNA 3'-end formation. In Lodderomyces elongisporus (strain ATCC 11503 / CBS 2605 / JCM 1781 / NBRC 1676 / NRRL YB-4239) (Yeast), this protein is mRNA cleavage and polyadenylation factor CLP1.